The sequence spans 204 residues: Lysozyme g (204 aa).

Residues 1–19 (MHLMLVLLGLAALLGTSQS) form the signal peptide. Disulfide bonds link C23/C79 and C37/C48. Residues E92 and D105 contribute to the active site.

This sequence belongs to the glycosyl hydrolase 23 family.

It localises to the secreted. The catalysed reaction is Hydrolysis of (1-&gt;4)-beta-linkages between N-acetylmuramic acid and N-acetyl-D-glucosamine residues in a peptidoglycan and between N-acetyl-D-glucosamine residues in chitodextrins.. Its function is as follows. Has bacteriolytic activity against M.luteus. In Struthio camelus (Common ostrich), this protein is Lysozyme g.